The primary structure comprises 157 residues: Large ribosomal subunit protein uL22 (157 aa).

The protein belongs to the universal ribosomal protein uL22 family. In terms of assembly, part of the 50S ribosomal subunit.

In terms of biological role, this protein binds specifically to 23S rRNA. It makes multiple contacts with different domains of the 23S rRNA in the assembled 50S subunit and ribosome. Its function is as follows. The globular domain of the protein is located near the polypeptide exit tunnel on the outside of the subunit, while an extended beta-hairpin is found that lines the wall of the exit tunnel in the center of the 70S ribosome. This Staphylothermus marinus (strain ATCC 43588 / DSM 3639 / JCM 9404 / F1) protein is Large ribosomal subunit protein uL22.